Reading from the N-terminus, the 723-residue chain is Bifunctional lysine-specific demethylase and histidyl-hydroxylase NO66 (723 aa).

Disordered regions lie at residues 13–34 and 48–213; these read KKTA…QKAA and SAVK…APSC. Residues 14-31 show a composition bias toward basic residues; that stretch reads KTAKKPAKKTTKQNRQKQ. Over residues 49-72 the composition is skewed to low complexity; that stretch reads AVKQNNGAKGKAKANGVKGNAKAQ. Acidic residues-rich tracts occupy residues 88-106 and 114-129; these read ESVD…EDNE and EDDY…EFEE. Over residues 133–155 the composition is skewed to low complexity; the sequence is NSPSGSCSCSASSGSSNTENSPP. Positions 190–199 are enriched in basic and acidic residues; that stretch reads EQKEGKELSK. Residues 204–213 show a composition bias toward low complexity; it reads KSAPAAAPSC. A JmjC domain is found at 379–518; the sequence is NPSTYLKGLR…NLMEALMPAV (140 aa). Residues His-419, Asp-421, and His-484 each contribute to the Fe cation site.

The protein belongs to the ROX family. NO66 subfamily. Fe(2+) is required as a cofactor.

Its subcellular location is the nucleus. It catalyses the reaction N(6),N(6)-dimethyl-L-lysyl(36)-[histone H3] + 2 2-oxoglutarate + 2 O2 = L-lysyl(36)-[histone H3] + 2 formaldehyde + 2 succinate + 2 CO2. Functionally, oxygenase that can act as both a histone lysine demethylase and a ribosomal histidine hydroxylase. Specifically demethylates 'Lys-4' (H3K4me) and 'Lys-36' (H3K36me) of histone H3, thereby playing a central role in histone code. This is Bifunctional lysine-specific demethylase and histidyl-hydroxylase NO66 from Drosophila grimshawi (Hawaiian fruit fly).